We begin with the raw amino-acid sequence, 765 residues long: Single-minded homolog 1 (765 aa).

The region spanning 1–53 (MKEKSKNAARTRREKENSEFYELAKLLPLPSAITSQLDKASIIRLTTSYLKMR) is the bHLH domain. PAS domains lie at 77–147 (GREL…QPYH) and 218–288 (PPSA…LVKG). Positions 292-335 (TKYYRFLAKQGGWVWVQSYATIVHNSRSSRPHCIVSVNYVLTDT) constitute a PAC domain. Residues 336–765 (EYKGLQLSLD…GTSVIITNGS (430 aa)) enclose the Single-minded C-terminal domain. Low complexity-rich tracts occupy residues 352 to 365 (PTFS…PTIS) and 373 to 385 (SRLS…SRTS). Disordered stretches follow at residues 352-428 (PTFS…PGSQ) and 527-560 (WDED…PHEP). The Nuclear localization signal signature appears at 368–387 (RKGAKSRLSSSKSKSRTSPY). A compositionally biased stretch (basic and acidic residues) spans 394 to 404 (HTERSESDHDS).

Efficient DNA binding requires dimerization with another bHLH protein. Heterodimer; forms a heterodimer with ARNT, ARNT2. As to expression, detected in lung, skeletal muscle and kidney. During fetal development it is found in the CNS, developing kidney, mesodermal and endodermal tissues, including developing somites, mesonephric duct, and foregut.

The protein resides in the nucleus. Functionally, transcriptional factor that may have pleiotropic effects during embryogenesis and in the adult. This chain is Single-minded homolog 1 (Sim1), found in Mus musculus (Mouse).